Reading from the N-terminus, the 197-residue chain is Phosphoheptose isomerase (197 aa).

Positions 36-197 (LFAALANNGR…IDALLLGDTE (162 aa)) constitute an SIS domain. Position 51–53 (51–53 (NGG)) interacts with substrate. The Zn(2+) site is built by histidine 60 and glutamate 64. Residues glutamate 64, 93 to 94 (ND), 119 to 121 (STS), serine 124, and glutamine 174 each bind substrate. Residues glutamine 174 and histidine 182 each contribute to the Zn(2+) site.

The protein belongs to the SIS family. GmhA subfamily. Homotetramer. It depends on Zn(2+) as a cofactor.

Its subcellular location is the cytoplasm. The catalysed reaction is 2 D-sedoheptulose 7-phosphate = D-glycero-alpha-D-manno-heptose 7-phosphate + D-glycero-beta-D-manno-heptose 7-phosphate. Its pathway is carbohydrate biosynthesis; D-glycero-D-manno-heptose 7-phosphate biosynthesis; D-glycero-alpha-D-manno-heptose 7-phosphate and D-glycero-beta-D-manno-heptose 7-phosphate from sedoheptulose 7-phosphate: step 1/1. Catalyzes the isomerization of sedoheptulose 7-phosphate in D-glycero-D-manno-heptose 7-phosphate. This is Phosphoheptose isomerase from Bordetella avium (strain 197N).